The following is a 472-amino-acid chain: E3 ubiquitin-protein ligase MYLIP-A (472 aa).

Residues 1–279 form the FERM domain; the sequence is MLCHVTRPDA…ETHAFYRCDT (279 aa). The RING-type zinc finger occupies 384 to 419; sequence CMLCCEEEIDAAFCPCGHMVCCQNCAAQLQSCPVCR.

Interacts with anxa5. As to expression, ubiquitous.

It localises to the cytoplasm. The protein resides in the cytosol. The catalysed reaction is S-ubiquitinyl-[E2 ubiquitin-conjugating enzyme]-L-cysteine + [acceptor protein]-L-lysine = [E2 ubiquitin-conjugating enzyme]-L-cysteine + N(6)-ubiquitinyl-[acceptor protein]-L-lysine.. Its pathway is protein modification; protein ubiquitination. Its function is as follows. E3 ubiquitin-protein ligase that mediates ubiquitination and subsequent proteasomal degradation of myosin regulatory light chain (MRLC). Regulates cell movements during gastrulation by acting downstream of fz7 to antagonize the frizzled-signaling pathway. The protein is E3 ubiquitin-protein ligase MYLIP-A (mylipa) of Danio rerio (Zebrafish).